A 278-amino-acid chain; its full sequence is 3-oxoacyl-[acyl-carrier-protein] reductase (278 aa).

The NADP(+) site is built by Thr-13, Arg-14, Ile-16, Ser-36, Ser-40, Thr-44, Asp-66, Phe-67, Glu-77, Gly-122, Gln-125, and Glu-126. Ser-182 (proton donor) is an active-site residue. Residues Tyr-198, Lys-202, Leu-230, and Val-231 each contribute to the NADP(+) site. Residue Tyr-198 is the Proton acceptor of the active site. Lys-202 serves as the catalytic Lowers pKa of active site Tyr.

The protein belongs to the short-chain dehydrogenases/reductases (SDR) family.

Its subcellular location is the mitochondrion. The enzyme catalyses a (3R)-hydroxyacyl-[ACP] + NADP(+) = a 3-oxoacyl-[ACP] + NADPH + H(+). It functions in the pathway lipid metabolism; fatty acid biosynthesis. Involved in biosynthesis of fatty acids in mitochondria. The protein is 3-oxoacyl-[acyl-carrier-protein] reductase (OAR1) of Saccharomyces cerevisiae (strain ATCC 204508 / S288c) (Baker's yeast).